We begin with the raw amino-acid sequence, 94 residues long: MTYGKLIFFIIVLVGFALFMSFNVEHRCDVSLVFYTFQAVPITLSLLFAFACGALTALLFLIDPDAKTRKQKREDSPTSAPTGGVSSPEHVDVP.

2 helical membrane-spanning segments follow: residues 7 to 24 and 39 to 61; these read IFFI…SFNV and AVPI…LLFL. Positions 68–94 are disordered; the sequence is TRKQKREDSPTSAPTGGVSSPEHVDVP.

Its subcellular location is the cell membrane. This is an uncharacterized protein from Treponema pallidum (strain Nichols).